The following is a 403-amino-acid chain: GDSL esterase/lipase At1g28590 (403 aa).

The N-terminal stretch at 1 to 27 (MASLDSLPAMKLVRFILSTLLVTSVNS) is a signal peptide. Ser43 (nucleophile) is an active-site residue. Residues Asn139 and Asn323 are each glycosylated (N-linked (GlcNAc...) asparagine). Catalysis depends on residues Asp346 and His349.

The protein belongs to the 'GDSL' lipolytic enzyme family.

Its subcellular location is the secreted. The sequence is that of GDSL esterase/lipase At1g28590 from Arabidopsis thaliana (Mouse-ear cress).